The sequence spans 302 residues: Putative glycine N-acyltransferase-like protein 1B (302 aa).

Belongs to the glycine N-acyltransferase family.

It carries out the reaction an acyl-CoA + L-glutamine = an N(2)-acyl-L-glutamine + CoA + H(+). In terms of biological role, putative acyltransferase which transfers an acyl group to the N-terminus of glutamine. Can use phenylacetyl-CoA as an acyl donor. In Homo sapiens (Human), this protein is Putative glycine N-acyltransferase-like protein 1B.